A 163-amino-acid chain; its full sequence is Cyclic pyranopterin monophosphate synthase (163 aa).

Substrate contacts are provided by residues 75-77 (LCH) and 115-116 (ME). Asp-130 is a catalytic residue.

The protein belongs to the MoaC family. In terms of assembly, homohexamer; trimer of dimers.

The enzyme catalyses (8S)-3',8-cyclo-7,8-dihydroguanosine 5'-triphosphate = cyclic pyranopterin phosphate + diphosphate. It functions in the pathway cofactor biosynthesis; molybdopterin biosynthesis. Catalyzes the conversion of (8S)-3',8-cyclo-7,8-dihydroguanosine 5'-triphosphate to cyclic pyranopterin monophosphate (cPMP). The protein is Cyclic pyranopterin monophosphate synthase of Variovorax paradoxus (strain S110).